The following is a 582-amino-acid chain: Kelch-like protein diablo (582 aa).

The tract at residues methionine 1–lysine 22 is disordered. The BTB domain occupies cysteine 41 to glutamate 108. In terms of domain architecture, BACK spans cysteine 143–glycine 245. 6 Kelch repeats span residues valine 292–aspartate 338, leucine 340–glycine 386, phenylalanine 387–glycine 433, leucine 435–asparagine 480, isoleucine 482–glycine 527, and glutamine 528–alanine 574.

It participates in protein modification; protein ubiquitination. Functionally, probable substrate-specific adapter of an E3 ubiquitin-protein ligase complex which mediates the ubiquitination and subsequent proteasomal degradation of target proteins. May have a role in synapse differentiation and growth. The polypeptide is Kelch-like protein diablo (Culex quinquefasciatus (Southern house mosquito)).